Here is a 325-residue protein sequence, read N- to C-terminus: NADH-quinone oxidoreductase subunit H (325 aa).

8 helical membrane passes run 11-31 (ILIS…CGAF), 81-101 (AIFT…FAIV), 114-134 (IGIL…LFAG), 154-174 (LSYE…VGSF), 186-206 (VWNV…GVAV), 237-257 (FFVG…TLFF), 265-285 (LPPF…FILI), and 304-324 (VCLP…LYNA).

This sequence belongs to the complex I subunit 1 family. As to quaternary structure, NDH-1 is composed of 13 different subunits. Subunits NuoA, H, J, K, L, M, N constitute the membrane sector of the complex.

The protein resides in the cell inner membrane. It catalyses the reaction a quinone + NADH + 5 H(+)(in) = a quinol + NAD(+) + 4 H(+)(out). NDH-1 shuttles electrons from NADH, via FMN and iron-sulfur (Fe-S) centers, to quinones in the respiratory chain. The immediate electron acceptor for the enzyme in this species is believed to be ubiquinone. Couples the redox reaction to proton translocation (for every two electrons transferred, four hydrogen ions are translocated across the cytoplasmic membrane), and thus conserves the redox energy in a proton gradient. This subunit may bind ubiquinone. The sequence is that of NADH-quinone oxidoreductase subunit H from Yersinia pseudotuberculosis serotype O:3 (strain YPIII).